The sequence spans 1065 residues: MAPAPLGVPEEQLLGCRSRVLSRLLFIAQTALLLLPAAGAGLCPAPCSCRIPLLDCSRRKLPAPSWRALSGLLPPDTAILDFSHNRLSNWNISLESQTLQEVKMNYNELTEIPYFGEPTSNITLLSLVHNIIPEINAQALQFYPALESLDLSSNIISEIKTSSFPRMQLKYLNLSNNRITTLEAGCFDNLSSSLLVVKLNRNRMSMIPPKIFKLPHLQFLELKRNRIKIVEGLTFQGLDSLRSLKMQRNGISKLKDGAFFGLNNMEELELEHNNLTRVNKGWLYGLRMLQQLYVSQNAIERISPDAWEFCQRLSELDLSYNQLTRLDESAFVGLSLLERLNLGDNRVTHIADGVFRFLSNLQTLDLRNNEISWAIEDASEAFAGLTSLTKLILQGNQIKSITKKAFIGLESLEHLDLNNNAIMSIQENAFSQTHLKELILNTSSLLCDCHLKWLLQWLVDNNFQHSVNVSCAHPEWLAGQSILNVDLKDFVCDDFLKPQIRTHPETIIALRGMNVTLTCTAVSSSDSPMSTVWRKDSEILYDVDTENFVRYWQQAGEALEYTSILHLFNVNFTDEGKYQCIVTNHFGSNYSQKAKLTVNEMPSFLKTPMDLTIRTGAMARLECAAEGHPAPQISWQKDGGTDFPAARERRMHVMPEDDVFFIANVKIEDMGIYSCMAQNTAGGLSANASLTVLETPSFIRPLEDKTVTRGETAVLQCIAGGSPAPRLNWTKDDGPLLVTERHFFAAANQLLIIVDAGLEDAGKYTCIMSNTLGTERGHIYLNVISSPNCDSSQSSIGHEDDGWTTVGIVIIVVVCCVVGTSLIWVIVIYHMRRKNEDYSITNTEELNLPADIPSYLSSQGTLSEPQEGYSNSEAGSHQQLMPPANGYIHKGTDGGTGTRVICSDCYDNANIYSRTREYCPYTYIAEEDVLDQTLSSLMVQMPKETYLVHPPQDTTALESLIPSANREPSAFPTNHERISEKKLPSTQMSGETLQRPVWNINRELGLPHPPFSQQPVHESPQLHQNEGLAGREPDCSASSMSCHRLQDHAFDFSRTRNIQDGSEGT.

The first 40 residues, 1 to 40 (MAPAPLGVPEEQLLGCRSRVLSRLLFIAQTALLLLPAAGA), serve as a signal peptide directing secretion. Residues 41–75 (GLCPAPCSCRIPLLDCSRRKLPAPSWRALSGLLPP) enclose the LRRNT domain. Residues 41–807 (GLCPAPCSCR…HEDDGWTTVG (767 aa)) are Extracellular-facing. 15 LRR repeats span residues 76 to 97 (DTAI…LESQ), 98 to 119 (TLQE…GEPT), 121 to 142 (NITL…ALQF), 145 to 166 (ALES…SFPR), 168 to 189 (QLKY…CFDN), 193 to 214 (SLLV…IFKL), 216 to 237 (HLQF…TFQG), 240 to 261 (SLRS…AFFG), 264 to 285 (NMEE…WLYG), 288 to 309 (MLQQ…AWEF), 312 to 333 (RLSE…AFVG), 336 to 357 (LLER…VFRF), 360 to 382 (NLQT…SEAF), 387 to 408 (SLTK…AFIG), and 411 to 432 (SLEH…AFSQ). Asn-91 carries N-linked (GlcNAc...) asparagine glycosylation. Residue Asn-121 is glycosylated (N-linked (GlcNAc...) asparagine). Asn-173 and Asn-189 each carry an N-linked (GlcNAc...) asparagine glycan. N-linked (GlcNAc...) asparagine glycosylation occurs at Asn-274. Asn-441, Asn-468, Asn-514, Asn-571, and Asn-589 each carry an N-linked (GlcNAc...) asparagine glycan. Residues 443–494 (SSLLCDCHLKWLLQWLVDNNFQHSVNVSCAHPEWLAGQSILNVDLKDFVCDD) form the LRRCT domain. Ig-like C2-type domains lie at 498 to 597 (PQIR…AKLT), 602 to 691 (PSFL…ASLT), and 696 to 785 (PSFI…NVIS). Cys-519 and Cys-580 are oxidised to a cystine. Cys-623 and Cys-675 form a disulfide bridge. N-linked (GlcNAc...) asparagine glycosylation is found at Asn-687 and Asn-728. A disulfide bond links Cys-717 and Cys-766. The chain crosses the membrane as a helical span at residues 808 to 828 (IVIIVVVCCVVGTSLIWVIVI). Topologically, residues 829–1065 (YHMRRKNEDY…RNIQDGSEGT (237 aa)) are cytoplasmic. The residue at position 906 (Tyr-906) is a Phosphotyrosine. Disordered regions lie at residues 963–990 (SANR…QMSG) and 1003–1040 (ELGL…ASSM). Over residues 974-983 (NHERISEKKL) the composition is skewed to basic and acidic residues. Over residues 1013 to 1024 (QQPVHESPQLHQ) the composition is skewed to polar residues.

In terms of tissue distribution, detected in all tissues analyzed.

It is found in the cell membrane. Its subcellular location is the cytoplasm. This Homo sapiens (Human) protein is Leucine-rich repeats and immunoglobulin-like domains protein 2 (LRIG2).